The sequence spans 542 residues: Probable protein kinase UbiB (542 aa).

Residues 123–505 (DFDEQALASA…ADNKTYNVKM (383 aa)) form the Protein kinase domain. Residues 129-137 (LASASIAQV) and Lys-156 each bind ATP. Residue Asp-291 is the Proton acceptor of the active site. Residues 506–526 (IIMGSIILSLLWQFNSLPLWL) form a helical membrane-spanning segment.

The protein belongs to the ABC1 family. UbiB subfamily.

Its subcellular location is the cell inner membrane. Its pathway is cofactor biosynthesis; ubiquinone biosynthesis [regulation]. Its function is as follows. Is probably a protein kinase regulator of UbiI activity which is involved in aerobic coenzyme Q (ubiquinone) biosynthesis. The chain is Probable protein kinase UbiB from Haemophilus ducreyi (strain 35000HP / ATCC 700724).